The sequence spans 184 residues: Thylakoid membrane protein slr0575 (184 aa).

2 consecutive transmembrane segments (helical) span residues 5 to 25 and 31 to 51; these read ISLAAVGLTVGGILTITGFVA and ATLNLAGFFYGIPLVLGGLAL.

It localises to the cellular thylakoid membrane. This is Thylakoid membrane protein slr0575 from Synechocystis sp. (strain ATCC 27184 / PCC 6803 / Kazusa).